We begin with the raw amino-acid sequence, 213 residues long: Large ribosomal subunit protein uL1 (213 aa).

The protein belongs to the universal ribosomal protein uL1 family. In terms of assembly, part of the 50S ribosomal subunit.

Its function is as follows. Binds directly to 23S rRNA. Probably involved in E site tRNA release. In terms of biological role, protein L1 is also a translational repressor protein, it controls the translation of its operon by binding to its mRNA. The sequence is that of Large ribosomal subunit protein uL1 from Methanocorpusculum labreanum (strain ATCC 43576 / DSM 4855 / Z).